A 314-amino-acid chain; its full sequence is MRVCRTLKISIKSFPSSLSLLSLYKRRLHKSTSHSSTATSSHYSKNNLPSDSPDLLFDYFIDGHKIHVNPNAVEPLHLRRNADVVGFSLPHGVKQSFENYIQKYPLSDQVENSSNIYDPSSPPDSPRKQQTHLGTIPPEHPDVFFHNLKKKLDSLHTHSSPLTVYRNHLLTCETDSALAQLFKSEIYQQLSDFRRDFPLSHALRDTMLIARLNFLNPMLALSFFQAVKKHSPNAYVRGCSAPVYNQAILSVWQGCKDPNFVLHLLGEMRENVVMRDSETREAINIVYKDVNEWPKQLLFSQNRILEKLKIFLLP.

Residues 111–136 (ENSSNIYDPSSPPDSPRKQQTHLGTI) form a disordered region.

As to quaternary structure, component of the MRH5C complex, composed of mrh5, ppr4, mtf2, and sls1. Proteins mtf2 and sls1 form a subcomplex that serves as a scaffold to bring mrh5 and ppr4 together. The MRH5C complex associates with the small subunit of the mitochondrial ribosome.

In terms of biological role, translation activation factor that as part of the MRH5C complex specifically recruits cox1 mRNA to the mitochondrial ribosome for translation initiation. The polypeptide is Mitochondrial translation factor 2 (Schizosaccharomyces pombe (strain 972 / ATCC 24843) (Fission yeast)).